The primary structure comprises 491 residues: Argininosuccinate lyase (491 aa).

It belongs to the lyase 1 family. Argininosuccinate lyase subfamily.

The protein localises to the cytoplasm. The catalysed reaction is 2-(N(omega)-L-arginino)succinate = fumarate + L-arginine. The protein operates within amino-acid biosynthesis; L-arginine biosynthesis; L-arginine from L-ornithine and carbamoyl phosphate: step 3/3. The chain is Argininosuccinate lyase from Methanosarcina acetivorans (strain ATCC 35395 / DSM 2834 / JCM 12185 / C2A).